We begin with the raw amino-acid sequence, 60 residues long: Sperm protamine P1 (60 aa).

The disordered stretch occupies residues 1-60 (MARYRHSRSRSRSRYQRRRRRRSRYRSQRRRYRRRRGSRRRRRRGRRRGYRRRYSRRRRY).

Belongs to the protamine P1 family. Testis.

The protein resides in the nucleus. It localises to the chromosome. Its function is as follows. Protamines substitute for histones in the chromatin of sperm during the haploid phase of spermatogenesis. They compact sperm DNA into a highly condensed, stable and inactive complex. This is Sperm protamine P1 (PRM1) from Phascolarctos cinereus (Koala).